Reading from the N-terminus, the 202-residue chain is Large ribosomal subunit protein uL4 (202 aa).

The interval 45–71 (HAQKNRSEVSGSGKKPWRQKGTGRARV) is disordered.

The protein belongs to the universal ribosomal protein uL4 family. In terms of assembly, part of the 50S ribosomal subunit.

One of the primary rRNA binding proteins, this protein initially binds near the 5'-end of the 23S rRNA. It is important during the early stages of 50S assembly. It makes multiple contacts with different domains of the 23S rRNA in the assembled 50S subunit and ribosome. Functionally, forms part of the polypeptide exit tunnel. This chain is Large ribosomal subunit protein uL4, found in Buchnera aphidicola subsp. Baizongia pistaciae (strain Bp).